Here is a 292-residue protein sequence, read N- to C-terminus: Ribosomal RNA small subunit methyltransferase A (292 aa).

S-adenosyl-L-methionine is bound by residues Asn-29, Leu-31, Gly-56, Glu-77, Asp-102, and Asn-127.

Belongs to the class I-like SAM-binding methyltransferase superfamily. rRNA adenine N(6)-methyltransferase family. RsmA subfamily.

The protein localises to the cytoplasm. It catalyses the reaction adenosine(1518)/adenosine(1519) in 16S rRNA + 4 S-adenosyl-L-methionine = N(6)-dimethyladenosine(1518)/N(6)-dimethyladenosine(1519) in 16S rRNA + 4 S-adenosyl-L-homocysteine + 4 H(+). Its function is as follows. Specifically dimethylates two adjacent adenosines (A1518 and A1519) in the loop of a conserved hairpin near the 3'-end of 16S rRNA in the 30S particle. May play a critical role in biogenesis of 30S subunits. The chain is Ribosomal RNA small subunit methyltransferase A from Bacillus pumilus (strain SAFR-032).